Consider the following 283-residue polypeptide: Lipoyl synthase (283 aa).

Residues cysteine 35, cysteine 40, cysteine 46, cysteine 61, cysteine 65, cysteine 68, and serine 273 each contribute to the [4Fe-4S] cluster site. Positions 47 to 262 (FRERQATFLI…RAAALATGFA (216 aa)) constitute a Radical SAM core domain.

It belongs to the radical SAM superfamily. Lipoyl synthase family. Requires [4Fe-4S] cluster as cofactor.

The protein resides in the cytoplasm. It carries out the reaction [[Fe-S] cluster scaffold protein carrying a second [4Fe-4S](2+) cluster] + N(6)-octanoyl-L-lysyl-[protein] + 2 oxidized [2Fe-2S]-[ferredoxin] + 2 S-adenosyl-L-methionine + 4 H(+) = [[Fe-S] cluster scaffold protein] + N(6)-[(R)-dihydrolipoyl]-L-lysyl-[protein] + 4 Fe(3+) + 2 hydrogen sulfide + 2 5'-deoxyadenosine + 2 L-methionine + 2 reduced [2Fe-2S]-[ferredoxin]. It participates in protein modification; protein lipoylation via endogenous pathway; protein N(6)-(lipoyl)lysine from octanoyl-[acyl-carrier-protein]: step 2/2. Catalyzes the radical-mediated insertion of two sulfur atoms into the C-6 and C-8 positions of the octanoyl moiety bound to the lipoyl domains of lipoate-dependent enzymes, thereby converting the octanoylated domains into lipoylated derivatives. The chain is Lipoyl synthase from Geobacter metallireducens (strain ATCC 53774 / DSM 7210 / GS-15).